Reading from the N-terminus, the 353-residue chain is Methionine import ATP-binding protein MetN (353 aa).

Positions 7–249 constitute an ABC transporter domain; it reads LENIDVTFKQ…PKEELSRQFV (243 aa). 41–48 contributes to the ATP binding site; that stretch reads GYSGAGKS.

The protein belongs to the ABC transporter superfamily. Methionine importer (TC 3.A.1.24) family. In terms of assembly, the complex is composed of two ATP-binding proteins (MetN), two transmembrane proteins (MetI) and a solute-binding protein (MetQ).

The protein localises to the cell membrane. The catalysed reaction is L-methionine(out) + ATP + H2O = L-methionine(in) + ADP + phosphate + H(+). The enzyme catalyses D-methionine(out) + ATP + H2O = D-methionine(in) + ADP + phosphate + H(+). In terms of biological role, part of the ABC transporter complex MetNIQ involved in methionine import. Responsible for energy coupling to the transport system. The protein is Methionine import ATP-binding protein MetN of Ligilactobacillus salivarius (strain UCC118) (Lactobacillus salivarius).